A 132-amino-acid chain; its full sequence is Small ribosomal subunit protein uS11 (132 aa).

The protein belongs to the universal ribosomal protein uS11 family. Part of the 30S ribosomal subunit. Interacts with proteins S7 and S18. Binds to IF-3.

In terms of biological role, located on the platform of the 30S subunit, it bridges several disparate RNA helices of the 16S rRNA. Forms part of the Shine-Dalgarno cleft in the 70S ribosome. This chain is Small ribosomal subunit protein uS11, found in Leifsonia xyli subsp. xyli (strain CTCB07).